Consider the following 697-residue polypeptide: Serotransferrin (697 aa).

Residues 1–19 (MRLTVGALLACAALGLCLA) form the signal peptide. Transferrin-like domains are found at residues 25-347 (VKWC…NQQE) and 360-682 (VKWC…NMRK). 2 disulfide bridges follow: Cys28–Cys67 and Cys38–Cys58. Residue Arg42 is modified to Dimethylated arginine. Fe(3+)-binding residues include Asp82 and Tyr114. 8 cysteine pairs are disulfide-bonded: Cys137/Cys213, Cys156/Cys350, Cys177/Cys193, Cys180/Cys196, Cys190/Cys198, Cys246/Cys260, Cys363/Cys395, and Cys373/Cys386. Hydrogencarbonate contacts are provided by Thr139, Arg143, Ala145, and Gly146. Tyr207 contributes to the Fe(3+) binding site. Fe(3+) is bound at residue His268. Ser388 is subject to Phosphoserine. Fe(3+) is bound by residues Asp410 and Tyr448. Intrachain disulfides connect Cys420-Cys692, Cys435-Cys655, Cys472-Cys543, Cys496-Cys683, Cys506-Cys520, Cys517-Cys526, Cys583-Cys597, and Cys633-Cys638. Residues Thr474, Arg478, Ala480, and Gly481 each coordinate hydrogencarbonate. Asn513 carries an N-linked (GlcNAc...) asparagine glycan. Tyr537 is a binding site for Fe(3+). A Fe(3+)-binding site is contributed by His605. At Ser684 the chain carries Phosphoserine.

Belongs to the transferrin family. In terms of assembly, monomer. Part of a complex composed of SLC40A1/ferroportin, TF/transferrin and HEPH/hephaestin that transfers iron from cells to transferrin. As to expression, expressed by the liver and secreted in plasma.

Its subcellular location is the secreted. Its function is as follows. Transferrins are iron binding transport proteins which can bind two Fe(3+) ions in association with the binding of an anion, usually bicarbonate. It is responsible for the transport of iron from sites of absorption and heme degradation to those of storage and utilization. Serum transferrin may also have a further role in stimulating cell proliferation. In Mus musculus (Mouse), this protein is Serotransferrin (Tf).